The sequence spans 372 residues: Alanine dehydrogenase 1 (372 aa).

The active site involves His-94. An NAD(+)-binding site is contributed by 170–200 (TYVIFGGGVAATNAANVALGLNAKVIIIELN).

This sequence belongs to the AlaDH/PNT family.

It catalyses the reaction L-alanine + NAD(+) + H2O = pyruvate + NH4(+) + NADH + H(+). Its pathway is amino-acid degradation; L-alanine degradation via dehydrogenase pathway; NH(3) and pyruvate from L-alanine: step 1/1. In terms of biological role, may play a role in cell wall synthesis as L-alanine is an important constituent of the peptidoglycan layer. The chain is Alanine dehydrogenase 1 (ald1) from Staphylococcus aureus (strain NCTC 8325 / PS 47).